Consider the following 91-residue polypeptide: Alpha-latrotoxin associated low molecular weight protein SGV150-311 (91 aa).

Positions 1 to 18 (MNVLHFLILLMSVVSVFC) are cleaved as a signal peptide.

Belongs to the arthropod CHH/MIH/GIH/VIH hormone family. As to expression, expressed by the venom gland.

The protein localises to the secreted. Functionally, may increase the toxicity of alpha-latrotoxin and/or other venom components. Is non-toxic to mice and to the cockroach Periplaneta americana. This chain is Alpha-latrotoxin associated low molecular weight protein SGV150-311, found in Steatoda grossa (False black widow).